The primary structure comprises 1207 residues: DNA-directed RNA polymerase subunit beta' (1207 aa).

Zn(2+)-binding residues include cysteine 60, cysteine 62, cysteine 75, and cysteine 78. Mg(2+) is bound by residues aspartate 450, aspartate 452, and aspartate 454. Cysteine 818, cysteine 892, cysteine 899, and cysteine 902 together coordinate Zn(2+).

The protein belongs to the RNA polymerase beta' chain family. The RNAP catalytic core consists of 2 alpha, 1 beta, 1 beta' and 1 omega subunit. When a sigma factor is associated with the core the holoenzyme is formed, which can initiate transcription. Mg(2+) is required as a cofactor. It depends on Zn(2+) as a cofactor.

The enzyme catalyses RNA(n) + a ribonucleoside 5'-triphosphate = RNA(n+1) + diphosphate. In terms of biological role, DNA-dependent RNA polymerase catalyzes the transcription of DNA into RNA using the four ribonucleoside triphosphates as substrates. The protein is DNA-directed RNA polymerase subunit beta' of Lactococcus lactis subsp. cremoris (strain MG1363).